Reading from the N-terminus, the 579-residue chain is A-type ATP synthase subunit A (579 aa).

229–236 (GPFGSGKT) contributes to the ATP binding site.

Belongs to the ATPase alpha/beta chains family. Has multiple subunits with at least A(3), B(3), C, D, E, F, H, I and proteolipid K(x).

The protein resides in the cell membrane. The enzyme catalyses ATP + H2O + 4 H(+)(in) = ADP + phosphate + 5 H(+)(out). Its function is as follows. Component of the A-type ATP synthase that produces ATP from ADP in the presence of a proton gradient across the membrane. The A chain is the catalytic subunit. This chain is A-type ATP synthase subunit A, found in Methanocella arvoryzae (strain DSM 22066 / NBRC 105507 / MRE50).